Here is a 218-residue protein sequence, read N- to C-terminus: Small ribosomal subunit protein uS5 (218 aa).

The S5 DRBM domain occupies 66–129 (LKQELLNVNL…REAKLNLVPV (64 aa)).

The protein belongs to the universal ribosomal protein uS5 family. Part of the 30S ribosomal subunit. Contacts protein S4.

With S4 and S12 plays an important role in translational accuracy. This chain is Small ribosomal subunit protein uS5, found in Pyrobaculum aerophilum (strain ATCC 51768 / DSM 7523 / JCM 9630 / CIP 104966 / NBRC 100827 / IM2).